We begin with the raw amino-acid sequence, 205 residues long: Fe/S biogenesis protein NfuA (205 aa).

The [4Fe-4S] cluster site is built by C162 and C165.

Belongs to the NfuA family. As to quaternary structure, homodimer. It depends on [4Fe-4S] cluster as a cofactor.

In terms of biological role, involved in iron-sulfur cluster biogenesis. Binds a 4Fe-4S cluster, can transfer this cluster to apoproteins, and thereby intervenes in the maturation of Fe/S proteins. Could also act as a scaffold/chaperone for damaged Fe/S proteins. This chain is Fe/S biogenesis protein NfuA, found in Blochmanniella floridana.